A 57-amino-acid polypeptide reads, in one-letter code: Large ribosomal subunit protein bL32 (57 aa).

The protein belongs to the bacterial ribosomal protein bL32 family.

This is Large ribosomal subunit protein bL32 from Staphylococcus aureus (strain MSSA476).